The primary structure comprises 78 residues: Acyl carrier protein (78 aa).

The region spanning 2-77 (SDIADRVKKI…DAIKFLEKNS (76 aa)) is the Carrier domain. Ser-37 is modified (O-(pantetheine 4'-phosphoryl)serine).

Belongs to the acyl carrier protein (ACP) family. In terms of processing, 4'-phosphopantetheine is transferred from CoA to a specific serine of apo-ACP by AcpS. This modification is essential for activity because fatty acids are bound in thioester linkage to the sulfhydryl of the prosthetic group.

It localises to the cytoplasm. Its pathway is lipid metabolism; fatty acid biosynthesis. Carrier of the growing fatty acid chain in fatty acid biosynthesis. The chain is Acyl carrier protein from Methylobacterium sp. (strain 4-46).